The sequence spans 260 residues: Carbonic anhydrase 2 (260 aa).

Residue Ser2 is modified to N-acetylserine. The residue at position 2 (Ser2) is a Phosphoserine. The region spanning 3 to 259 (HHWGYSKSNG…LKNRKIKASF (257 aa)) is the Alpha-carbonic anhydrase domain. The tract at residues 16-39 (WHKEFPIANGDRQSPVDIDTGTAQ) is disordered. His64 serves as the catalytic Proton donor/acceptor. At Ser87 the chain carries Phosphoserine. Residues His94, His96, and His119 each coordinate Zn(2+). Residue Ser165 is modified to Phosphoserine. Residue 198-199 (TT) participates in substrate binding. Position 232 is a phosphoserine (Ser232).

The protein belongs to the alpha-carbonic anhydrase family. Interacts with SLC4A4 and SLC26A6. Interaction with SLC4A7 regulates SLC4A7 transporter activity. It depends on Zn(2+) as a cofactor.

The protein resides in the cytoplasm. Its subcellular location is the cell membrane. The enzyme catalyses hydrogencarbonate + H(+) = CO2 + H2O. It catalyses the reaction urea = cyanamide + H2O. Its activity is regulated as follows. Inhibited by acetazolamide. Catalyzes the reversible hydration of carbon dioxide. Can also hydrate cyanamide to urea. Involved in the regulation of fluid secretion into the anterior chamber of the eye. Essential for bone resorption and osteoclast differentiation. Contributes to intracellular pH regulation in the duodenal upper villous epithelium during proton-coupled peptide absorption. Stimulates the chloride-bicarbonate exchange activity of SLC26A6. The protein is Carbonic anhydrase 2 (Ca2) of Rattus norvegicus (Rat).